A 177-amino-acid polypeptide reads, in one-letter code: Late embryogenesis abundant protein 1 (177 aa).

The segment at 1-177 (MASHDQSYKA…DKDHFPTNRH (177 aa)) is disordered. A compositionally biased stretch (basic and acidic residues) spans 28 to 39 (IEDKAQAAKEKA). Residues 40 to 89 (QQAAQTAKDKTSQTAQAAKEKTQQTAQAAKEKTQQTAQAAKDETQQTAQA) show a composition bias toward low complexity. A run of 4 repeats spans residues 53–63 (TAQAAKEKTQQ), 64–74 (TAQAAKEKTQQ), 75–85 (TAQAAKDETQQ), and 86–96 (TAQAAKDKTQQ). The 4 X 11 AA approximate tandem repeats of T-A-Q-A-A-K-E-K-T-Q-Q stretch occupies residues 53-96 (TAQAAKEKTQQTAQAAKEKTQQTAQAAKDETQQTAQAAKDKTQQ). Over residues 90–117 (AKDKTQQTTEATKEKAQDTTGRAREKGS) the composition is skewed to basic and acidic residues. Polar residues predominate over residues 119 to 142 (MGQSTKETAQSGKDNSAGFLQQTG). The span at 164-177 (NDDKDKDHFPTNRH) shows a compositional bias: basic and acidic residues.

This sequence belongs to the LEA type 4 family. As to expression, highest expression is found in seeds. No expression detected in adult tissues.

This chain is Late embryogenesis abundant protein 1, found in Cicer arietinum (Chickpea).